Consider the following 203-residue polypeptide: Ribonuclease HII (203 aa).

One can recognise an RNase H type-2 domain in the interval 18–203 (GHYAGVDEVG…SFRPVREALA (186 aa)). 3 residues coordinate a divalent metal cation: aspartate 24, glutamate 25, and aspartate 116.

The protein belongs to the RNase HII family. Requires Mn(2+) as cofactor. The cofactor is Mg(2+).

The protein resides in the cytoplasm. The enzyme catalyses Endonucleolytic cleavage to 5'-phosphomonoester.. In terms of biological role, endonuclease that specifically degrades the RNA of RNA-DNA hybrids. The chain is Ribonuclease HII from Shewanella halifaxensis (strain HAW-EB4).